Reading from the N-terminus, the 391-residue chain is tRNA-specific 2-thiouridylase MnmA (391 aa).

ATP-binding positions include Gly9–Ser16 and Met35. The interaction with target base in tRNA stretch occupies residues Asn95–Asp97. Catalysis depends on Cys100, which acts as the Nucleophile. A disulfide bridge links Cys100 with Cys196. Gly124 contributes to the ATP binding site. The interval Lys146 to Gln148 is interaction with tRNA. Residue Cys196 is the Cysteine persulfide intermediate of the active site. Positions Arg308–Tyr309 are interaction with tRNA.

It belongs to the MnmA/TRMU family.

The protein resides in the cytoplasm. The enzyme catalyses S-sulfanyl-L-cysteinyl-[protein] + uridine(34) in tRNA + AH2 + ATP = 2-thiouridine(34) in tRNA + L-cysteinyl-[protein] + A + AMP + diphosphate + H(+). Functionally, catalyzes the 2-thiolation of uridine at the wobble position (U34) of tRNA, leading to the formation of s(2)U34. In Burkholderia cenocepacia (strain HI2424), this protein is tRNA-specific 2-thiouridylase MnmA.